The primary structure comprises 264 residues: Small ribosomal subunit protein uS2 (264 aa).

The protein belongs to the universal ribosomal protein uS2 family.

The protein is Small ribosomal subunit protein uS2 (rpsB) of Helicobacter pylori (strain ATCC 700392 / 26695) (Campylobacter pylori).